Consider the following 375-residue polypeptide: DNA replication and repair protein RecF (375 aa).

30–37 (GDNAQGKS) provides a ligand contact to ATP.

This sequence belongs to the RecF family.

It localises to the cytoplasm. In terms of biological role, the RecF protein is involved in DNA metabolism; it is required for DNA replication and normal SOS inducibility. RecF binds preferentially to single-stranded, linear DNA. It also seems to bind ATP. The chain is DNA replication and repair protein RecF from Gloeobacter violaceus (strain ATCC 29082 / PCC 7421).